The sequence spans 204 residues: dITP/XTP pyrophosphatase (204 aa).

Residue 8–13 (TKNAGK) participates in substrate binding. Asp70 (proton acceptor) is an active-site residue. A Mg(2+)-binding site is contributed by Asp70. Substrate-binding positions include Ser71, 153 to 156 (FGYD), Lys176, and 181 to 182 (HR).

Belongs to the HAM1 NTPase family. As to quaternary structure, homodimer. The cofactor is Mg(2+).

The enzyme catalyses XTP + H2O = XMP + diphosphate + H(+). The catalysed reaction is dITP + H2O = dIMP + diphosphate + H(+). It catalyses the reaction ITP + H2O = IMP + diphosphate + H(+). Its function is as follows. Pyrophosphatase that catalyzes the hydrolysis of nucleoside triphosphates to their monophosphate derivatives, with a high preference for the non-canonical purine nucleotides XTP (xanthosine triphosphate), dITP (deoxyinosine triphosphate) and ITP. Seems to function as a house-cleaning enzyme that removes non-canonical purine nucleotides from the nucleotide pool, thus preventing their incorporation into DNA/RNA and avoiding chromosomal lesions. This Geobacillus kaustophilus (strain HTA426) protein is dITP/XTP pyrophosphatase.